A 266-amino-acid chain; its full sequence is rRNA adenine N-6-methyltransferase (266 aa).

6 residues coordinate S-adenosyl-L-methionine: histidine 14, threonine 16, glycine 41, glutamate 62, aspartate 87, and asparagine 103.

This sequence belongs to the class I-like SAM-binding methyltransferase superfamily. rRNA adenine N(6)-methyltransferase family.

Functionally, involved in erythromycin resistance. The chain is rRNA adenine N-6-methyltransferase (ermFU) from Bacteroides fragilis.